We begin with the raw amino-acid sequence, 275 residues long: Dermonecrotic toxin SpeSicTox-betaIIA3i (275 aa).

The active site involves H5. Residues E25 and D27 each coordinate Mg(2+). The active-site Nucleophile is the H41. Cystine bridges form between C45-C51 and C47-C190. D85 is a binding site for Mg(2+).

This sequence belongs to the arthropod phospholipase D family. Class II subfamily. Mg(2+) serves as cofactor. As to expression, expressed by the venom gland.

It is found in the secreted. It catalyses the reaction an N-(acyl)-sphingosylphosphocholine = an N-(acyl)-sphingosyl-1,3-cyclic phosphate + choline. The enzyme catalyses an N-(acyl)-sphingosylphosphoethanolamine = an N-(acyl)-sphingosyl-1,3-cyclic phosphate + ethanolamine. It carries out the reaction a 1-acyl-sn-glycero-3-phosphocholine = a 1-acyl-sn-glycero-2,3-cyclic phosphate + choline. The catalysed reaction is a 1-acyl-sn-glycero-3-phosphoethanolamine = a 1-acyl-sn-glycero-2,3-cyclic phosphate + ethanolamine. In terms of biological role, dermonecrotic toxins cleave the phosphodiester linkage between the phosphate and headgroup of certain phospholipids (sphingolipid and lysolipid substrates), forming an alcohol (often choline) and a cyclic phosphate. This toxin acts on sphingomyelin (SM). It may also act on ceramide phosphoethanolamine (CPE), lysophosphatidylcholine (LPC) and lysophosphatidylethanolamine (LPE), but not on lysophosphatidylserine (LPS), and lysophosphatidylglycerol (LPG). It acts by transphosphatidylation, releasing exclusively cyclic phosphate products as second products. Induces dermonecrosis, hemolysis, increased vascular permeability, edema, inflammatory response, and platelet aggregation. The sequence is that of Dermonecrotic toxin SpeSicTox-betaIIA3i from Sicarius peruensis (Six-eyed sand spider).